The sequence spans 475 residues: Ribulose bisphosphate carboxylase large chain (475 aa).

The propeptide occupies 1 to 2; that stretch reads MS. Residue Pro-3 is modified to N-acetylproline. The residue at position 14 (Lys-14) is an N6,N6,N6-trimethyllysine. 2 residues coordinate substrate: Asn-123 and Thr-173. Residue Lys-175 is the Proton acceptor of the active site. Lys-177 serves as a coordination point for substrate. Mg(2+) contacts are provided by Lys-201, Asp-203, and Glu-204. The residue at position 201 (Lys-201) is an N6-carboxylysine. Residue His-294 is the Proton acceptor of the active site. 3 residues coordinate substrate: Arg-295, His-327, and Ser-379.

This sequence belongs to the RuBisCO large chain family. Type I subfamily. Heterohexadecamer of 8 large chains and 8 small chains; disulfide-linked. The disulfide link is formed within the large subunit homodimers. Requires Mg(2+) as cofactor. In terms of processing, the disulfide bond which can form in the large chain dimeric partners within the hexadecamer appears to be associated with oxidative stress and protein turnover.

It localises to the plastid. It is found in the chloroplast. The catalysed reaction is 2 (2R)-3-phosphoglycerate + 2 H(+) = D-ribulose 1,5-bisphosphate + CO2 + H2O. It catalyses the reaction D-ribulose 1,5-bisphosphate + O2 = 2-phosphoglycolate + (2R)-3-phosphoglycerate + 2 H(+). Its function is as follows. RuBisCO catalyzes two reactions: the carboxylation of D-ribulose 1,5-bisphosphate, the primary event in carbon dioxide fixation, as well as the oxidative fragmentation of the pentose substrate in the photorespiration process. Both reactions occur simultaneously and in competition at the same active site. This Angiopteris lygodiifolia (Turnip fern) protein is Ribulose bisphosphate carboxylase large chain.